Consider the following 333-residue polypeptide: Trans-1,2-dihydrobenzene-1,2-diol dehydrogenase (333 aa).

Belongs to the Gfo/Idh/MocA family. Homodimer.

The enzyme catalyses (1R,2R)-1,2-dihydrobenzene-1,2-diol + NADP(+) = catechol + NADPH + H(+). It carries out the reaction D-xylose + NADP(+) = D-xylono-1,5-lactone + NADPH + H(+). The sequence is that of Trans-1,2-dihydrobenzene-1,2-diol dehydrogenase (Dhdh) from Mus musculus (Mouse).